A 485-amino-acid chain; its full sequence is UDP-N-acetylmuramoyl-L-alanyl-D-glutamate--2,6-diaminopimelate ligase (485 aa).

UDP-N-acetyl-alpha-D-muramoyl-L-alanyl-D-glutamate is bound at residue Ser32. Residue Gly111–Thr117 coordinates ATP. UDP-N-acetyl-alpha-D-muramoyl-L-alanyl-D-glutamate is bound by residues Thr153–Thr154, Ser180, and Arg188. Lys220 bears the N6-carboxylysine mark. Meso-2,6-diaminopimelate is bound by residues Arg382, Asp405–Arg408, Gly455, and Glu459. Positions Asp405–Arg408 match the Meso-diaminopimelate recognition motif motif.

Belongs to the MurCDEF family. MurE subfamily. It depends on Mg(2+) as a cofactor. In terms of processing, carboxylation is probably crucial for Mg(2+) binding and, consequently, for the gamma-phosphate positioning of ATP.

The protein localises to the cytoplasm. It carries out the reaction UDP-N-acetyl-alpha-D-muramoyl-L-alanyl-D-glutamate + meso-2,6-diaminopimelate + ATP = UDP-N-acetyl-alpha-D-muramoyl-L-alanyl-gamma-D-glutamyl-meso-2,6-diaminopimelate + ADP + phosphate + H(+). Its pathway is cell wall biogenesis; peptidoglycan biosynthesis. Catalyzes the addition of meso-diaminopimelic acid to the nucleotide precursor UDP-N-acetylmuramoyl-L-alanyl-D-glutamate (UMAG) in the biosynthesis of bacterial cell-wall peptidoglycan. This chain is UDP-N-acetylmuramoyl-L-alanyl-D-glutamate--2,6-diaminopimelate ligase, found in Chlamydia felis (strain Fe/C-56) (Chlamydophila felis).